We begin with the raw amino-acid sequence, 282 residues long: Nucleotide-binding protein Fnod_1159 (282 aa).

Position 9–16 (9–16) interacts with ATP; sequence GHSGAGKS. Position 57 to 60 (57 to 60) interacts with GTP; the sequence is DIRS.

Belongs to the RapZ-like family.

In terms of biological role, displays ATPase and GTPase activities. The protein is Nucleotide-binding protein Fnod_1159 of Fervidobacterium nodosum (strain ATCC 35602 / DSM 5306 / Rt17-B1).